The primary structure comprises 413 residues: UPF0754 membrane protein PCC7424_0748 (413 aa).

The next 2 membrane-spanning stretches (helical) occupy residues 3 to 23 and 391 to 411; these read IALE…GAII and IVNL…VILL.

It belongs to the UPF0754 family.

It localises to the cell inner membrane. The sequence is that of UPF0754 membrane protein PCC7424_0748 from Gloeothece citriformis (strain PCC 7424) (Cyanothece sp. (strain PCC 7424)).